Reading from the N-terminus, the 418-residue chain is Putative ion-transport protein YfeO (418 aa).

The next 12 membrane-spanning stretches (helical) occupy residues 10–30 (LLLS…LIVV), 54–74 (DSPL…GLVI), 99–119 (ALPG…SLGP), 120–140 (EHPI…RLLP), 149–169 (ILAS…AALI), 186–206 (LFAP…FFHP), 223–243 (ILSG…AVWC), 258–278 (VLVL…GGPV), 300–320 (DYFL…ASGF), 322–342 (GGRI…LHEH), 343–363 (VPAV…VLVV), and 371–391 (LFMA…CIVM).

It belongs to the chloride channel (TC 2.A.49) family.

The protein localises to the cell membrane. This is Putative ion-transport protein YfeO from Escherichia coli (strain 55989 / EAEC).